The primary structure comprises 431 residues: tRNA(Ile)-lysidine synthase (431 aa).

An ATP-binding site is contributed by 25 to 30 (SGGLDS).

Belongs to the tRNA(Ile)-lysidine synthase family.

The protein resides in the cytoplasm. It catalyses the reaction cytidine(34) in tRNA(Ile2) + L-lysine + ATP = lysidine(34) in tRNA(Ile2) + AMP + diphosphate + H(+). Its function is as follows. Ligates lysine onto the cytidine present at position 34 of the AUA codon-specific tRNA(Ile) that contains the anticodon CAU, in an ATP-dependent manner. Cytidine is converted to lysidine, thus changing the amino acid specificity of the tRNA from methionine to isoleucine. The sequence is that of tRNA(Ile)-lysidine synthase from Legionella pneumophila (strain Paris).